Reading from the N-terminus, the 341-residue chain is Uroporphyrinogen decarboxylase (341 aa).

Residues 23–27, Asp-73, Tyr-148, Ser-203, and His-318 contribute to the substrate site; that span reads RQAGR.

The protein belongs to the uroporphyrinogen decarboxylase family. In terms of assembly, homodimer.

Its subcellular location is the cytoplasm. It catalyses the reaction uroporphyrinogen III + 4 H(+) = coproporphyrinogen III + 4 CO2. It functions in the pathway porphyrin-containing compound metabolism; protoporphyrin-IX biosynthesis; coproporphyrinogen-III from 5-aminolevulinate: step 4/4. In terms of biological role, catalyzes the decarboxylation of four acetate groups of uroporphyrinogen-III to yield coproporphyrinogen-III. The protein is Uroporphyrinogen decarboxylase of Brucella suis (strain ATCC 23445 / NCTC 10510).